The chain runs to 315 residues: Transaldolase (315 aa).

K125 functions as the Schiff-base intermediate with substrate in the catalytic mechanism.

Belongs to the transaldolase family. Type 1 subfamily. In terms of assembly, homodimer.

It is found in the cytoplasm. The catalysed reaction is D-sedoheptulose 7-phosphate + D-glyceraldehyde 3-phosphate = D-erythrose 4-phosphate + beta-D-fructose 6-phosphate. It participates in carbohydrate degradation; pentose phosphate pathway; D-glyceraldehyde 3-phosphate and beta-D-fructose 6-phosphate from D-ribose 5-phosphate and D-xylulose 5-phosphate (non-oxidative stage): step 2/3. Transaldolase is important for the balance of metabolites in the pentose-phosphate pathway. This Polaromonas sp. (strain JS666 / ATCC BAA-500) protein is Transaldolase.